The following is a 458-amino-acid chain: Glutamyl-tRNA(Gln) amidotransferase subunit D (458 aa).

The Asparaginase/glutaminase domain occupies 97–434 (PNVSVMSTGG…KEVERLMRTN (338 aa)). Catalysis depends on residues threonine 107, threonine 185, aspartate 186, and lysine 264.

It belongs to the asparaginase 1 family. GatD subfamily. As to quaternary structure, heterodimer of GatD and GatE.

The catalysed reaction is L-glutamyl-tRNA(Gln) + L-glutamine + ATP + H2O = L-glutaminyl-tRNA(Gln) + L-glutamate + ADP + phosphate + H(+). In terms of biological role, allows the formation of correctly charged Gln-tRNA(Gln) through the transamidation of misacylated Glu-tRNA(Gln) in organisms which lack glutaminyl-tRNA synthetase. The reaction takes place in the presence of glutamine and ATP through an activated gamma-phospho-Glu-tRNA(Gln). The GatDE system is specific for glutamate and does not act on aspartate. The chain is Glutamyl-tRNA(Gln) amidotransferase subunit D from Methanopyrus kandleri (strain AV19 / DSM 6324 / JCM 9639 / NBRC 100938).